We begin with the raw amino-acid sequence, 350 residues long: Biotin synthase (350 aa).

Residues 41 to 268 (NEVQISRLLS…KSRVRLSAGR (228 aa)) form the Radical SAM core domain. [4Fe-4S] cluster contacts are provided by Cys-56, Cys-60, and Cys-63. 4 residues coordinate [2Fe-2S] cluster: Cys-100, Cys-131, Cys-191, and Arg-263.

This sequence belongs to the radical SAM superfamily. Biotin synthase family. As to quaternary structure, homodimer. Requires [4Fe-4S] cluster as cofactor. [2Fe-2S] cluster serves as cofactor.

It carries out the reaction (4R,5S)-dethiobiotin + (sulfur carrier)-SH + 2 reduced [2Fe-2S]-[ferredoxin] + 2 S-adenosyl-L-methionine = (sulfur carrier)-H + biotin + 2 5'-deoxyadenosine + 2 L-methionine + 2 oxidized [2Fe-2S]-[ferredoxin]. It functions in the pathway cofactor biosynthesis; biotin biosynthesis; biotin from 7,8-diaminononanoate: step 2/2. Functionally, catalyzes the conversion of dethiobiotin (DTB) to biotin by the insertion of a sulfur atom into dethiobiotin via a radical-based mechanism. The protein is Biotin synthase of Shewanella halifaxensis (strain HAW-EB4).